We begin with the raw amino-acid sequence, 61 residues long: Large ribosomal subunit protein bL32 (61 aa).

Residues 1-16 are compositionally biased toward basic residues; sequence MPTPKKKTSRSKRDMR. Residues 1-47 are disordered; that stretch reads MPTPKKKTSRSKRDMRRSHDGLTAPAIAVEKKTGELVRPHRAHKGAD. A compositionally biased stretch (basic and acidic residues) spans 29 to 38; it reads VEKKTGELVR.

Belongs to the bacterial ribosomal protein bL32 family.

This chain is Large ribosomal subunit protein bL32, found in Bdellovibrio bacteriovorus (strain ATCC 15356 / DSM 50701 / NCIMB 9529 / HD100).